Here is a 373-residue protein sequence, read N- to C-terminus: Queuine tRNA-ribosyltransferase (373 aa).

D90 (proton acceptor) is an active-site residue. Substrate-binding positions include D90–F94, D144, Q193, and G220. Residues G251–D257 form an RNA binding region. D270 functions as the Nucleophile in the catalytic mechanism. An RNA binding; important for wobble base 34 recognition region spans residues T275 to R279. 4 residues coordinate Zn(2+): C308, C310, C313, and H339.

The protein belongs to the queuine tRNA-ribosyltransferase family. As to quaternary structure, homodimer. Within each dimer, one monomer is responsible for RNA recognition and catalysis, while the other monomer binds to the replacement base PreQ1. Zn(2+) is required as a cofactor.

The catalysed reaction is 7-aminomethyl-7-carbaguanine + guanosine(34) in tRNA = 7-aminomethyl-7-carbaguanosine(34) in tRNA + guanine. It participates in tRNA modification; tRNA-queuosine biosynthesis. Functionally, catalyzes the base-exchange of a guanine (G) residue with the queuine precursor 7-aminomethyl-7-deazaguanine (PreQ1) at position 34 (anticodon wobble position) in tRNAs with GU(N) anticodons (tRNA-Asp, -Asn, -His and -Tyr). Catalysis occurs through a double-displacement mechanism. The nucleophile active site attacks the C1' of nucleotide 34 to detach the guanine base from the RNA, forming a covalent enzyme-RNA intermediate. The proton acceptor active site deprotonates the incoming PreQ1, allowing a nucleophilic attack on the C1' of the ribose to form the product. After dissociation, two additional enzymatic reactions on the tRNA convert PreQ1 to queuine (Q), resulting in the hypermodified nucleoside queuosine (7-(((4,5-cis-dihydroxy-2-cyclopenten-1-yl)amino)methyl)-7-deazaguanosine). The polypeptide is Queuine tRNA-ribosyltransferase (Campylobacter jejuni subsp. jejuni serotype O:6 (strain 81116 / NCTC 11828)).